The primary structure comprises 693 residues: Periplasmic alpha-galactoside-binding protein (693 aa).

The first 20 residues, 1–20 (MKTHRLNMTASLLIGISAFA), serve as a signal peptide directing secretion.

Belongs to the bacterial solute-binding protein 5 family.

It is found in the periplasm. In terms of biological role, involved in the transport of alpha-galactosides. Required for the utilization of raffinose and melibiose. Probably acts as a periplasmic substrate-binding protein for a transport system. The chain is Periplasmic alpha-galactoside-binding protein from Rhizobium meliloti (strain 1021) (Ensifer meliloti).